The primary structure comprises 299 residues: Probable lipid kinase YegS (299 aa).

The DAGKc domain occupies 2 to 133 (AEFPASLLIL…IDMAQVNKQT (132 aa)). ATP-binding positions include threonine 40, 66–72 (GDGTINE), and threonine 95. Mg(2+) contacts are provided by leucine 215, aspartate 218, and leucine 220. The active-site Proton acceptor is glutamate 271.

Belongs to the diacylglycerol/lipid kinase family. YegS lipid kinase subfamily. Mg(2+) serves as cofactor. The cofactor is Ca(2+).

It localises to the cytoplasm. Functionally, probably phosphorylates lipids; the in vivo substrate is unknown. The polypeptide is Probable lipid kinase YegS (Escherichia coli (strain K12 / MC4100 / BW2952)).